The primary structure comprises 160 residues: Phosphopantetheine adenylyltransferase (160 aa).

Substrate is bound at residue serine 9. Residues 9 to 10 and histidine 17 each bind ATP; that span reads SF. Substrate is bound by residues lysine 41, leucine 73, and arginine 87. Residues 88–90, glutamate 98, and 123–129 each bind ATP; these read GLR and YTFLSSS.

It belongs to the bacterial CoaD family. Homohexamer. Mg(2+) serves as cofactor.

The protein resides in the cytoplasm. It carries out the reaction (R)-4'-phosphopantetheine + ATP + H(+) = 3'-dephospho-CoA + diphosphate. It functions in the pathway cofactor biosynthesis; coenzyme A biosynthesis; CoA from (R)-pantothenate: step 4/5. Its function is as follows. Reversibly transfers an adenylyl group from ATP to 4'-phosphopantetheine, yielding dephospho-CoA (dPCoA) and pyrophosphate. In Dictyoglomus turgidum (strain DSM 6724 / Z-1310), this protein is Phosphopantetheine adenylyltransferase.